We begin with the raw amino-acid sequence, 531 residues long: GTPase Obg (531 aa).

The 158-residue stretch at 2–159 (ASFVDRVIVH…QEVELELKSI (158 aa)) folds into the Obg domain. The OBG-type G domain occupies 160 to 341 (ADIALVGFPS…LSFAMAALVS (182 aa)). GTP is bound by residues 166 to 173 (GFPSAGKS), 191 to 195 (FTTLV), 212 to 215 (DVPG), 293 to 296 (NKVD), and 322 to 324 (STA). Mg(2+)-binding residues include serine 173 and threonine 193. Residues 346–365 (QEEQREQQRQTVPVLQPEPV) form a disordered region. Positions 368–453 (RRGRDRREFV…ENGVVFDWEP (86 aa)) constitute an OCT domain. A disordered region spans residues 459 to 531 (AELLGGPRGS…TSETKETNEK (73 aa)). 2 stretches are compositionally biased toward basic and acidic residues: residues 468-507 (SDLR…ERRA) and 514-531 (VDAR…TNEK).

The protein belongs to the TRAFAC class OBG-HflX-like GTPase superfamily. OBG GTPase family. As to quaternary structure, monomer. The cofactor is Mg(2+).

The protein localises to the cytoplasm. Functionally, an essential GTPase which binds GTP, GDP and possibly (p)ppGpp with moderate affinity, with high nucleotide exchange rates and a fairly low GTP hydrolysis rate. Plays a role in control of the cell cycle, stress response, ribosome biogenesis and in those bacteria that undergo differentiation, in morphogenesis control. This chain is GTPase Obg, found in Kocuria rhizophila (strain ATCC 9341 / DSM 348 / NBRC 103217 / DC2201).